Reading from the N-terminus, the 450-residue chain is MADGIDRTAEERMEFTTSKEVTVAPTFEDMHLKENLLRGIYAYGYESPSAVQSRAIVQICKGRDTIAQAQSGTGKTATFSISILQVIDTVLRETQALVLSPTRELATQIQSVVMALGDYMNVQCHACIGGTNVGEDIRKLDHGQHVVSGTPGRVADMIRRRHLRTRHIKMLVLDEADELLNRGFREQIYDVYRYLPPATQVVVVSATLPYDVLDMTTKFMTDPVRILVKRDELTLEGLKQYFIAVEKEEWKFDTLCDLYDTLTITQAVIFCNTRRKVDWLTDKMREANFTVSSMHGEMPQKERDSIMQDFRQGNSRVLISTDVWARGIDVQQVSLVINYDLPSNRENYIHRIGRSGRFGRKGVAINFVTSEDVRILRDIELYYSTQIDEMPMNGTLFYLRYRPMSRLSLWLTQSNSCRPSHVTTLSWSTNVEHTFPLLLMNAFSKIQIGI.

The Q motif motif lies at 25–53; that stretch reads PTFEDMHLKENLLRGIYAYGYESPSAVQS. The 171-residue stretch at 56–226 folds into the Helicase ATP-binding domain; that stretch reads IVQICKGRDT…TKFMTDPVRI (171 aa). 69–76 contacts ATP; that stretch reads AQSGTGKT. The DEAD box signature appears at 174-177; sequence DEAD. One can recognise a Helicase C-terminal domain in the interval 237 to 398; the sequence is GLKQYFIAVE…EMPMNGTLFY (162 aa).

This sequence belongs to the DEAD box helicase family. DDX48/FAL1 subfamily.

The protein resides in the nucleus. Its subcellular location is the nucleolus. The enzyme catalyses ATP + H2O = ADP + phosphate + H(+). Its function is as follows. ATP-dependent RNA helicase involved in 40S ribosomal subunit biogenesis. Required for the processing and cleavage of 35S pre-rRNA at sites A0, A1, and A2, leading to mature 18S rRNA. The polypeptide is ATP-dependent RNA helicase FAL1 (FAL1) (Ajellomyces capsulatus (strain NAm1 / WU24) (Darling's disease fungus)).